The following is a 578-amino-acid chain: Probable actinorhodin transporter (578 aa).

The segment at 1–33 (MSSVEADEPDRATAPPSALLPEDGPGPDGTAAG) is disordered. Transmembrane regions (helical) follow at residues 78 to 98 (VIQW…VVGG), 109 to 129 (MFVV…VAAG), 135 to 155 (AARF…LGLI), 170 to 190 (AFGP…GFLV), 202 to 222 (VFLI…LLLP), 232 to 252 (FDVV…FPLV), 259 to 279 (WPAW…GFVA), 306 to 326 (GLAV…LLAL), 341 to 361 (LTMT…GAVL), 369 to 389 (ALHG…LTIG), 444 to 464 (LGFT…LGSQ), and 546 to 566 (AMVR…ALAF).

The protein belongs to the major facilitator superfamily. EmrB family.

It is found in the cell membrane. In terms of biological role, promotes the efflux of actinorhodin. The chain is Probable actinorhodin transporter (actII-2) from Streptomyces coelicolor (strain ATCC BAA-471 / A3(2) / M145).